The sequence spans 248 residues: Pyridoxine 5'-phosphate synthase (248 aa).

Residue asparagine 12 participates in 3-amino-2-oxopropyl phosphate binding. Position 14–15 (14–15 (DH)) interacts with 1-deoxy-D-xylulose 5-phosphate. A 3-amino-2-oxopropyl phosphate-binding site is contributed by arginine 23. Catalysis depends on histidine 48, which acts as the Proton acceptor. 2 residues coordinate 1-deoxy-D-xylulose 5-phosphate: arginine 50 and histidine 55. Glutamate 75 serves as the catalytic Proton acceptor. Threonine 105 contacts 1-deoxy-D-xylulose 5-phosphate. Histidine 199 (proton donor) is an active-site residue. 3-amino-2-oxopropyl phosphate is bound by residues glycine 200 and 221–222 (GH).

This sequence belongs to the PNP synthase family. As to quaternary structure, homooctamer; tetramer of dimers.

Its subcellular location is the cytoplasm. The catalysed reaction is 3-amino-2-oxopropyl phosphate + 1-deoxy-D-xylulose 5-phosphate = pyridoxine 5'-phosphate + phosphate + 2 H2O + H(+). The protein operates within cofactor biosynthesis; pyridoxine 5'-phosphate biosynthesis; pyridoxine 5'-phosphate from D-erythrose 4-phosphate: step 5/5. In terms of biological role, catalyzes the complicated ring closure reaction between the two acyclic compounds 1-deoxy-D-xylulose-5-phosphate (DXP) and 3-amino-2-oxopropyl phosphate (1-amino-acetone-3-phosphate or AAP) to form pyridoxine 5'-phosphate (PNP) and inorganic phosphate. This Jannaschia sp. (strain CCS1) protein is Pyridoxine 5'-phosphate synthase.